Consider the following 462-residue polypeptide: ATP synthase subunit beta (462 aa).

151 to 158 serves as a coordination point for ATP; it reads GGAGVGKT.

Belongs to the ATPase alpha/beta chains family. As to quaternary structure, F-type ATPases have 2 components, CF(1) - the catalytic core - and CF(0) - the membrane proton channel. CF(1) has five subunits: alpha(3), beta(3), gamma(1), delta(1), epsilon(1). CF(0) has four main subunits: a(1), b(1), b'(1) and c(9-12).

The protein resides in the cell inner membrane. It carries out the reaction ATP + H2O + 4 H(+)(in) = ADP + phosphate + 5 H(+)(out). In terms of biological role, produces ATP from ADP in the presence of a proton gradient across the membrane. The catalytic sites are hosted primarily by the beta subunits. This Chlorobium phaeobacteroides (strain BS1) protein is ATP synthase subunit beta.